A 605-amino-acid chain; its full sequence is Pyruvate decarboxylase 1 (605 aa).

D67 and H154 together coordinate substrate. Positions 432–514 (DSWFNCQKLR…FLINNGGYTI (83 aa)) are thiamine pyrophosphate binding. Positions 482, 509, and 511 each coordinate Mg(2+). A substrate-binding site is contributed by E515.

This sequence belongs to the TPP enzyme family. In terms of assembly, homotetramer. The cofactor is a metal cation. Requires thiamine diphosphate as cofactor.

It carries out the reaction a 2-oxocarboxylate + H(+) = an aldehyde + CO2. The chain is Pyruvate decarboxylase 1 (PDC1) from Oryza sativa subsp. japonica (Rice).